A 430-amino-acid chain; its full sequence is MPSVVVVGTQWGDEGKGKITDFLSSNAEVIARYQGGDNAGHTIVIDGKKFKLHLIPSGIFFPEKISVIGNGVVVNPKSLIEEIAYLAENGVSAESLRISDRAHVILPYHKKLDFLQEEAKGDKKIGTTIKGIGPAYMDKAARVGIRVADLLDKEIFEERLRTNLEAKNREFVKMYDSEPIEFEEIFEEYYEYGQQLKKYVTDTSVILNDALDAGKRVLFEGAQGVMLDIDQGTYPFVTSSNPVAGGVTIGSGVGPSKISKVVGVCKAYTSRVGDGPFPTELFDEVGHQIREVGHEYGTTTGRPRRVGWFDSVVMRHAKRVSGLTNLSLNSIDVLSGLETVKICVAYERSNGEQITHYPASLKELADCKPIYEELPGWSEDITSCRTLEELPEAARNYVRRVGELVGVRISTFSVGPGREQTNVLESVWGV.

GTP is bound by residues 12 to 18 (GDEGKGK) and 40 to 42 (GHT). Residue Asp13 is the Proton acceptor of the active site. 2 residues coordinate Mg(2+): Asp13 and Gly40. IMP is bound by residues 13-16 (DEGK), 38-41 (NAGH), Thr128, Arg142, Gln223, Thr238, and Arg302. The active-site Proton donor is the His41. Position 298 to 304 (298 to 304 (TTTGRPR)) interacts with substrate. Residues Arg304, 330-332 (SID), and 413-415 (SVG) each bind GTP.

This sequence belongs to the adenylosuccinate synthetase family. As to quaternary structure, homodimer. The cofactor is Mg(2+).

It is found in the cytoplasm. It catalyses the reaction IMP + L-aspartate + GTP = N(6)-(1,2-dicarboxyethyl)-AMP + GDP + phosphate + 2 H(+). It participates in purine metabolism; AMP biosynthesis via de novo pathway; AMP from IMP: step 1/2. Its function is as follows. Plays an important role in the de novo pathway of purine nucleotide biosynthesis. Catalyzes the first committed step in the biosynthesis of AMP from IMP. This Lactococcus lactis subsp. lactis (strain IL1403) (Streptococcus lactis) protein is Adenylosuccinate synthetase.